Here is a 97-residue protein sequence, read N- to C-terminus: Large ribosomal subunit protein bL27 (97 aa).

Positions 1 to 12 (MLKMTLNNLQLF) are excised as a propeptide. The interval 13-37 (AHKKGGGSTSNGRDSQAKRLGAKAA) is disordered.

Belongs to the bacterial ribosomal protein bL27 family. In terms of processing, the N-terminus is cleaved by ribosomal processing cysteine protease Prp.

In Streptococcus pneumoniae serotype 2 (strain D39 / NCTC 7466), this protein is Large ribosomal subunit protein bL27.